A 443-amino-acid polypeptide reads, in one-letter code: Oxygen-dependent coproporphyrinogen-III oxidase, mitochondrial (443 aa).

The N-terminal 98 residues, 1 to 98 (MALRLGRLGS…EMVPKSSGAR (98 aa)), are a transit peptide targeting the mitochondrion. Residues 89–112 (EMVPKSSGARSPSPGRREEDGDEL) are disordered. Ser101 carries the post-translational modification Phosphoserine. Residues 103-112 (GRREEDGDEL) are compositionally biased toward basic and acidic residues. Residues 182-191 (VLQDGRVFEK) form an important for dimerization region. Residue Ser233 coordinates coproporphyrinogen III. His247 functions as the Proton donor in the catalytic mechanism. 249 to 251 (NYR) contributes to the coproporphyrinogen III binding site. The interval 381–417 (YVEFNLLYDRGTKFGLFTPGSRIESILMSLPLTARWE) is important for dimerization. Lys393 carries the N6-acetyllysine; alternate modification. Lys393 carries the post-translational modification N6-succinyllysine; alternate. Coproporphyrinogen III is bound at residue 400-402 (GSR).

This sequence belongs to the aerobic coproporphyrinogen-III oxidase family. Homodimer. As to expression, expressed in erythroid cells. Expressed in liver.

It is found in the mitochondrion intermembrane space. The enzyme catalyses coproporphyrinogen III + O2 + 2 H(+) = protoporphyrinogen IX + 2 CO2 + 2 H2O. The protein operates within porphyrin-containing compound metabolism; protoporphyrin-IX biosynthesis; protoporphyrinogen-IX from coproporphyrinogen-III (O2 route): step 1/1. Functionally, involved in the heme biosynthesis. Catalyzes the aerobic oxidative decarboxylation of propionate groups of rings A and B of coproporphyrinogen-III to yield the vinyl groups in protoporphyrinogen-IX. The sequence is that of Oxygen-dependent coproporphyrinogen-III oxidase, mitochondrial (Cpox) from Mus musculus (Mouse).